The chain runs to 326 residues: Pancreas transcription factor 1 subunit alpha (326 aa).

The 53-residue stretch at 162–214 (QLRQAANVRERRRMQSINDAFEGLRSHIPTLPYEKRLSKVDTLRLAIGYINFL) folds into the bHLH domain. Over residues 229–240 (TGGCGGPGGSRH) the composition is skewed to gly residues. 2 disordered regions span residues 229 to 249 (TGGC…PGNQ) and 304 to 326 (DPRK…EFVS).

Component of the pancreas transcription factor 1 complex (PTF1) which is composed of TCF3/p75, TCF12/p64 and PTF1A/p48. TCF3 is responsible for the nuclear import of the p48/p64 complex. Interacts with TCF3 and RBPSUH/RBP-Jkappa. In terms of tissue distribution, exocrine pancreas-specific. Expressed in azaserine-induced pancreatic tumors (at protein level). Expressed in AR42J cells but not in ARIP, DSL6A, or DSL6B cells. Down-regulation is associated with the change of an azaserine-induced acinar cell carcinoma to a ductal phenotype.

It is found in the nucleus. The protein resides in the cytoplasm. Transcription factor implicated in the cell fate determination in various organs. Binds to the E-box consensus sequence 5'-CANNTG-3'. Plays a role in early and late pancreas development and differentiation. Important for determining whether cells allocated to the pancreatic buds continue towards pancreatic organogenesis or revert back to duodenal fates. May be involved in the maintenance of exocrine pancreas-specific gene expression including ELA1 and amylase. Required for the formation of pancreatic acinar and ductal cells. Plays an important role in cerebellar development. Directly regulated by FOXN4 and RORC during retinal development, FOXN4-PTF1A pathway plays a central role in directing the differentiation of retinal progenitors towards horizontal and amacrine fates. This chain is Pancreas transcription factor 1 subunit alpha (Ptf1a), found in Rattus norvegicus (Rat).